The chain runs to 124 residues: U33-theraphotoxin-Cg1a (124 aa).

The N-terminal stretch at 1 to 17 is a signal peptide; that stretch reads MKFAVAIAFTLLVCVFA. 5 disulfides stabilise this stretch: C26–C37, C31–C51, C36–C75, C61–C83, and C77–C94. Over residues 93-108 the composition is skewed to basic and acidic residues; the sequence is RCQEESGKSDKSKESQ. The segment at 93-124 is disordered; sequence RCQEESGKSDKSKESQGSDESEESEESKESCG. Residues 109-118 are compositionally biased toward acidic residues; that stretch reads GSDESEESEE.

Belongs to the neurotoxin 32 family. Expressed by the venom gland.

Its subcellular location is the secreted. The protein is U33-theraphotoxin-Cg1a of Chilobrachys guangxiensis (Chinese earth tiger tarantula).